A 161-amino-acid chain; its full sequence is Phosphopantetheine adenylyltransferase (161 aa).

Substrate is bound at residue Thr10. ATP contacts are provided by residues Thr10–Phe11 and His18. Lys42, Leu74, and Arg88 together coordinate substrate. ATP is bound by residues Gly89–Arg91, Glu99, and Asn124–Ser130.

Belongs to the bacterial CoaD family. As to quaternary structure, homohexamer. Mg(2+) is required as a cofactor.

The protein localises to the cytoplasm. The catalysed reaction is (R)-4'-phosphopantetheine + ATP + H(+) = 3'-dephospho-CoA + diphosphate. The protein operates within cofactor biosynthesis; coenzyme A biosynthesis; CoA from (R)-pantothenate: step 4/5. In terms of biological role, reversibly transfers an adenylyl group from ATP to 4'-phosphopantetheine, yielding dephospho-CoA (dPCoA) and pyrophosphate. This Wolinella succinogenes (strain ATCC 29543 / DSM 1740 / CCUG 13145 / JCM 31913 / LMG 7466 / NCTC 11488 / FDC 602W) (Vibrio succinogenes) protein is Phosphopantetheine adenylyltransferase.